Reading from the N-terminus, the 233-residue chain is Ion-translocating oxidoreductase complex subunit E (233 aa).

5 consecutive transmembrane segments (helical) span residues 22 to 42 (LLGL…LGLG), 69 to 89 (IPIY…LINA), 93 to 113 (GLYQ…IVVG), 128 to 148 (ALDG…LGSI), and 182 to 202 (PMLL…LLAA).

Belongs to the NqrDE/RnfAE family. In terms of assembly, the complex is composed of six subunits: RnfA, RnfB, RnfC, RnfD, RnfE and RnfG.

Its subcellular location is the cell inner membrane. Functionally, part of a membrane-bound complex that couples electron transfer with translocation of ions across the membrane. The polypeptide is Ion-translocating oxidoreductase complex subunit E (Erwinia tasmaniensis (strain DSM 17950 / CFBP 7177 / CIP 109463 / NCPPB 4357 / Et1/99)).